A 510-amino-acid chain; its full sequence is Bifunctional purine biosynthesis protein PurH (510 aa).

An MGS-like domain is found at M1 to C142.

Belongs to the PurH family.

The catalysed reaction is (6R)-10-formyltetrahydrofolate + 5-amino-1-(5-phospho-beta-D-ribosyl)imidazole-4-carboxamide = 5-formamido-1-(5-phospho-D-ribosyl)imidazole-4-carboxamide + (6S)-5,6,7,8-tetrahydrofolate. It carries out the reaction IMP + H2O = 5-formamido-1-(5-phospho-D-ribosyl)imidazole-4-carboxamide. Its pathway is purine metabolism; IMP biosynthesis via de novo pathway; 5-formamido-1-(5-phospho-D-ribosyl)imidazole-4-carboxamide from 5-amino-1-(5-phospho-D-ribosyl)imidazole-4-carboxamide (10-formyl THF route): step 1/1. The protein operates within purine metabolism; IMP biosynthesis via de novo pathway; IMP from 5-formamido-1-(5-phospho-D-ribosyl)imidazole-4-carboxamide: step 1/1. This chain is Bifunctional purine biosynthesis protein PurH, found in Campylobacter jejuni subsp. jejuni serotype O:2 (strain ATCC 700819 / NCTC 11168).